Consider the following 61-residue polypeptide: Large ribosomal subunit protein bL32 (61 aa).

Positions 1 to 16 are enriched in basic residues; that stretch reads MAVPKRKTSPSKRGMR. The segment at 1–61 is disordered; sequence MAVPKRKTSP…RQVLTPKESA (61 aa). Positions 28 to 44 are enriched in basic and acidic residues; that stretch reads VEDKNSGELRRPHHIDL.

This sequence belongs to the bacterial ribosomal protein bL32 family.

The sequence is that of Large ribosomal subunit protein bL32 from Rhizobium etli (strain CIAT 652).